The following is a 319-amino-acid chain: Quinolinate synthase (319 aa).

2 residues coordinate iminosuccinate: His35 and Ser52. Position 97 (Cys97) interacts with [4Fe-4S] cluster. Iminosuccinate-binding positions include 123–125 (YIN) and Ser140. Cys183 lines the [4Fe-4S] cluster pocket. Residues 209–211 (HPE) and Thr226 contribute to the iminosuccinate site. Cys276 contacts [4Fe-4S] cluster.

This sequence belongs to the quinolinate synthase family. Type 2 subfamily. The cofactor is [4Fe-4S] cluster.

It localises to the cytoplasm. It carries out the reaction iminosuccinate + dihydroxyacetone phosphate = quinolinate + phosphate + 2 H2O + H(+). The protein operates within cofactor biosynthesis; NAD(+) biosynthesis; quinolinate from iminoaspartate: step 1/1. Its function is as follows. Catalyzes the condensation of iminoaspartate with dihydroxyacetone phosphate to form quinolinate. The polypeptide is Quinolinate synthase (Microcystis aeruginosa (strain NIES-843 / IAM M-2473)).